Reading from the N-terminus, the 504-residue chain is Maturase K (504 aa).

It belongs to the intron maturase 2 family. MatK subfamily.

The protein localises to the plastid. Its subcellular location is the chloroplast. Usually encoded in the trnK tRNA gene intron. Probably assists in splicing its own and other chloroplast group II introns. This chain is Maturase K, found in Rorippa amphibia (Great yellow-cress).